The following is a 115-amino-acid chain: Large ribosomal subunit protein bL20 (115 aa).

The protein belongs to the bacterial ribosomal protein bL20 family.

Functionally, binds directly to 23S ribosomal RNA and is necessary for the in vitro assembly process of the 50S ribosomal subunit. It is not involved in the protein synthesizing functions of that subunit. The protein is Large ribosomal subunit protein bL20 of Prochlorococcus marinus (strain MIT 9312).